A 375-amino-acid chain; its full sequence is MSKRDYYEVLGVGKSASKDEIKKAYRKLSKKYHPDINKEAGAAEKFKEVKEAYETLSDDQKRAHYDQFGHTDPNQGFGGGGFGGGDFGGFGFDDIFSSIFGGGARRRDPNAPRQGADLQYTMTLSFEEAAFGKETTIEIPREETCETCSGSGAKPGTKPETCSHCGGSGQLNMEQSTPFGKVVNRRVCHYCNGTGKQIKHKCSTCGGTGKVKKRKKINVTIPAGVDDGQQLRVAGQGEPGINGGPSGDLFVVFRVQEHEFFERDGDDIYCEMPLTFAQAALGDEIEVPTLHGKVKLKVPAGTQTGTKFRLKGKGVANVRGYGQGDQHIVVRVVTPTNLTENQKNILREFAEVSGNMPDEQEMSFFDKVKRAFKGD.

The region spanning 5–69 (DYYEVLGVGK…QKRAHYDQFG (65 aa)) is the J domain. A CR-type zinc finger spans residues 132 to 214 (GKETTIEIPR…CGGTGKVKKR (83 aa)). Positions 145, 148, 162, 165, 188, 191, 202, and 205 each coordinate Zn(2+). CXXCXGXG motif repeat units lie at residues 145–152 (CETCSGSG), 162–169 (CSHCGGSG), 188–195 (CHYCNGTG), and 202–209 (CSTCGGTG).

The protein belongs to the DnaJ family. As to quaternary structure, homodimer. Zn(2+) is required as a cofactor.

The protein localises to the cytoplasm. Functionally, participates actively in the response to hyperosmotic and heat shock by preventing the aggregation of stress-denatured proteins and by disaggregating proteins, also in an autonomous, DnaK-independent fashion. Unfolded proteins bind initially to DnaJ; upon interaction with the DnaJ-bound protein, DnaK hydrolyzes its bound ATP, resulting in the formation of a stable complex. GrpE releases ADP from DnaK; ATP binding to DnaK triggers the release of the substrate protein, thus completing the reaction cycle. Several rounds of ATP-dependent interactions between DnaJ, DnaK and GrpE are required for fully efficient folding. Also involved, together with DnaK and GrpE, in the DNA replication of plasmids through activation of initiation proteins. The chain is Chaperone protein DnaJ from Bacillus licheniformis (strain ATCC 14580 / DSM 13 / JCM 2505 / CCUG 7422 / NBRC 12200 / NCIMB 9375 / NCTC 10341 / NRRL NRS-1264 / Gibson 46).